The primary structure comprises 205 residues: CMRF35-like molecule 2 (205 aa).

A signal peptide spans 1-17 (MWLLPALLLLCLSGCLS). One can recognise an Ig-like V-type domain in the interval 18–120 (LKGPGSVTGT…VLDSWSRDPS (103 aa)). The Extracellular segment spans residues 18–173 (LKGPGSVTGT…NSGFRLSSPH (156 aa)). Cys36 and Cys104 form a disulfide bridge. N-linked (GlcNAc...) asparagine glycosylation is present at Asn154. The chain crosses the membrane as a helical span at residues 174-194 (FLLVVLLKLPLLLSMLGAVFW). Residues 195-205 (VNRPQWAPPGR) lie on the Cytoplasmic side of the membrane.

The protein belongs to the CD300 family. In terms of assembly, interacts with TYROBP. Post-translationally, N-glycosylated. In terms of tissue distribution, present on the surface of mature hematopoietic cells of the monocyte and myeloid lineages (at protein level).

The protein localises to the cell membrane. In terms of biological role, probably acts as an activating receptor. In Homo sapiens (Human), this protein is CMRF35-like molecule 2 (CD300E).